The sequence spans 238 residues: Large ribosomal subunit protein uL3 (238 aa).

Disordered regions lie at residues 140 to 164 (SHRSIGSTGGRQDPGKTWKNKKMPG) and 212 to 238 (LPKEAPKPGKFKVAGGEAEAAAQQEGA). N5-methylglutamine is present on Q151. The span at 225-238 (AGGEAEAAAQQEGA) shows a compositional bias: low complexity.

The protein belongs to the universal ribosomal protein uL3 family. In terms of assembly, part of the 50S ribosomal subunit. Forms a cluster with proteins L14 and L19. Post-translationally, methylated by PrmB.

Its function is as follows. One of the primary rRNA binding proteins, it binds directly near the 3'-end of the 23S rRNA, where it nucleates assembly of the 50S subunit. In Bradyrhizobium diazoefficiens (strain JCM 10833 / BCRC 13528 / IAM 13628 / NBRC 14792 / USDA 110), this protein is Large ribosomal subunit protein uL3.